A 337-amino-acid polypeptide reads, in one-letter code: MSVEVFYDDDADLGLIQGRTVAVIGYGSQGHAHALSLRDSGVDVVIGLPAGSKSRPKAEEQGLRVRTPAEAAAEADIIMILAPDTAQRALYTESIAPHLAAGKALFFGHGFNIRYGLIQPPADVDVAMVAPKGPGHLVRRQYVDGKGVPCLVAVEQDASGNAFGLALAYAKAIGGTRAGAIRTTFTEETETDLFGEQAVLCGGAAALVQTGFEVLTEAGYAPEVAYFECLHELKLIVDLMYEGGIARMRYSISDTAEYGDLSRGPRVIDSQVKERMRAILGEIRSGEFAREWVAEDEAGRPNFAKWRAESAAHPIEETGSKLRGMMSWVDRPITETA.

The KARI N-terminal Rossmann domain maps to 3–183 (VEVFYDDDAD…GGTRAGAIRT (181 aa)). Residues 26 to 29 (YGSQ), S52, S54, and 84 to 87 (DTAQ) each bind NADP(+). H109 is an active-site residue. Residue G135 participates in NADP(+) binding. Residues 184–329 (TFTEETETDL…SKLRGMMSWV (146 aa)) form the KARI C-terminal knotted domain. 4 residues coordinate Mg(2+): D192, E196, E228, and E232. S253 is a binding site for substrate.

It belongs to the ketol-acid reductoisomerase family. Mg(2+) serves as cofactor.

It catalyses the reaction (2R)-2,3-dihydroxy-3-methylbutanoate + NADP(+) = (2S)-2-acetolactate + NADPH + H(+). The catalysed reaction is (2R,3R)-2,3-dihydroxy-3-methylpentanoate + NADP(+) = (S)-2-ethyl-2-hydroxy-3-oxobutanoate + NADPH + H(+). It participates in amino-acid biosynthesis; L-isoleucine biosynthesis; L-isoleucine from 2-oxobutanoate: step 2/4. The protein operates within amino-acid biosynthesis; L-valine biosynthesis; L-valine from pyruvate: step 2/4. Functionally, involved in the biosynthesis of branched-chain amino acids (BCAA). Catalyzes an alkyl-migration followed by a ketol-acid reduction of (S)-2-acetolactate (S2AL) to yield (R)-2,3-dihydroxy-isovalerate. In the isomerase reaction, S2AL is rearranged via a Mg-dependent methyl migration to produce 3-hydroxy-3-methyl-2-ketobutyrate (HMKB). In the reductase reaction, this 2-ketoacid undergoes a metal-dependent reduction by NADPH to yield (R)-2,3-dihydroxy-isovalerate. The chain is Ketol-acid reductoisomerase (NADP(+)) from Salinispora arenicola (strain CNS-205).